Here is a 267-residue protein sequence, read N- to C-terminus: Formamidopyrimidine-DNA glycosylase (267 aa).

The Schiff-base intermediate with DNA role is filled by Pro-2. Residue Glu-3 is the Proton donor of the active site. Lys-58 serves as the catalytic Proton donor; for beta-elimination activity. DNA contacts are provided by His-91, Arg-110, and Arg-152. The segment at 233-267 (DVYGRGTDACTRCGGALEEIRLGNRSTVFCPRCQT) adopts an FPG-type zinc-finger fold. Residue Arg-257 is the Proton donor; for delta-elimination activity of the active site.

It belongs to the FPG family. In terms of assembly, monomer. Zn(2+) serves as cofactor.

The catalysed reaction is Hydrolysis of DNA containing ring-opened 7-methylguanine residues, releasing 2,6-diamino-4-hydroxy-5-(N-methyl)formamidopyrimidine.. It carries out the reaction 2'-deoxyribonucleotide-(2'-deoxyribose 5'-phosphate)-2'-deoxyribonucleotide-DNA = a 3'-end 2'-deoxyribonucleotide-(2,3-dehydro-2,3-deoxyribose 5'-phosphate)-DNA + a 5'-end 5'-phospho-2'-deoxyribonucleoside-DNA + H(+). Functionally, involved in base excision repair of DNA damaged by oxidation or by mutagenic agents. Acts as a DNA glycosylase that recognizes and removes damaged bases. Has a preference for oxidized purines, such as 7,8-dihydro-8-oxoguanine (8-oxoG). Has AP (apurinic/apyrimidinic) lyase activity and introduces nicks in the DNA strand. Cleaves the DNA backbone by beta-delta elimination to generate a single-strand break at the site of the removed base with both 3'- and 5'-phosphates. This chain is Formamidopyrimidine-DNA glycosylase, found in Geobacter metallireducens (strain ATCC 53774 / DSM 7210 / GS-15).